The sequence spans 154 residues: Ribosomal RNA large subunit methyltransferase H (154 aa).

Residue glycine 102 participates in S-adenosyl-L-methionine binding.

This sequence belongs to the RNA methyltransferase RlmH family. Homodimer.

Its subcellular location is the cytoplasm. It catalyses the reaction pseudouridine(1915) in 23S rRNA + S-adenosyl-L-methionine = N(3)-methylpseudouridine(1915) in 23S rRNA + S-adenosyl-L-homocysteine + H(+). Functionally, specifically methylates the pseudouridine at position 1915 (m3Psi1915) in 23S rRNA. In Phenylobacterium zucineum (strain HLK1), this protein is Ribosomal RNA large subunit methyltransferase H.